We begin with the raw amino-acid sequence, 971 residues long: Kinesin-like protein KIN-6 (971 aa).

Disordered regions lie at residues 1–44 (MEEK…SSLA) and 93–121 (TTTTKSRPRNVWPQNPSKKNNAKENRNPE). The segment covering 29 to 39 (ATPFTTTTKPP) has biased composition (low complexity). In terms of domain architecture, Kinesin motor spans 76-460 (SLKIFLRIKP…LRQASPYMKI (385 aa)). 202–209 (GPSGSGKT) contacts ATP. Over residues 700 to 709 (RREAGSEESS) the composition is skewed to basic and acidic residues. 2 disordered regions span residues 700 to 856 (RREA…TEEM) and 872 to 917 (KTTN…RLQP). The segment covering 768–783 (QSVNSEENVGIPSTIT) has biased composition (polar residues). Residues 785-797 (VEAEVTDFQRDQN) are compositionally biased toward basic and acidic residues. The segment covering 809–827 (EVSQDCINSGLSNVQTKSA) has biased composition (polar residues). A compositionally biased stretch (basic and acidic residues) spans 831–842 (RFPDSEKQERNR). A compositionally biased stretch (basic residues) spans 903 to 915 (KKQKNGQKPKRRL).

Belongs to the TRAFAC class myosin-kinesin ATPase superfamily. Kinesin family. KIN-6 subfamily.

In Arabidopsis thaliana (Mouse-ear cress), this protein is Kinesin-like protein KIN-6.